The sequence spans 396 residues: Elongation factor Tu 2 (396 aa).

The tr-type G domain occupies 10–206 (KPHVNVGTIG…ALDTYIPTPE (197 aa)). Positions 19 to 26 (GHVDHGKT) are G1. 19-26 (GHVDHGKT) is a binding site for GTP. T26 lines the Mg(2+) pocket. Residues 60 to 64 (GITIN) are G2. The tract at residues 81–84 (DCPG) is G3. Residues 81 to 85 (DCPGH) and 136 to 139 (NKAD) each bind GTP. Residues 136-139 (NKAD) are G4. Positions 174–176 (SAK) are G5.

The protein belongs to the TRAFAC class translation factor GTPase superfamily. Classic translation factor GTPase family. EF-Tu/EF-1A subfamily. As to quaternary structure, monomer.

The protein localises to the cytoplasm. It carries out the reaction GTP + H2O = GDP + phosphate + H(+). Functionally, GTP hydrolase that promotes the GTP-dependent binding of aminoacyl-tRNA to the A-site of ribosomes during protein biosynthesis. The protein is Elongation factor Tu 2 of Methylobacillus flagellatus (strain ATCC 51484 / DSM 6875 / VKM B-1610 / KT).